Here is a 380-residue protein sequence, read N- to C-terminus: uncharacterized protein (380 aa).

2 disordered regions span residues 278 to 323 and 345 to 368; these read AATI…PRVA and SLPGRESTPSDDGGSLHPSGRPRR. A compositionally biased stretch (basic residues) spans 301–319; that stretch reads RNGPRRPARRGTSRGRRCA.

This is an uncharacterized protein from Mycobacterium tuberculosis (strain CDC 1551 / Oshkosh).